Consider the following 181-residue polypeptide: Shikimate kinase (181 aa).

11–16 (GAGKSK) provides a ligand contact to ATP. Position 15 (Ser15) interacts with Mg(2+). Substrate is bound by residues Asp33, Arg58, and Gly80. ATP is bound at residue Arg128. Arg144 provides a ligand contact to substrate.

The protein belongs to the shikimate kinase family. In terms of assembly, monomer. Requires Mg(2+) as cofactor.

It is found in the cytoplasm. The catalysed reaction is shikimate + ATP = 3-phosphoshikimate + ADP + H(+). The protein operates within metabolic intermediate biosynthesis; chorismate biosynthesis; chorismate from D-erythrose 4-phosphate and phosphoenolpyruvate: step 5/7. In terms of biological role, catalyzes the specific phosphorylation of the 3-hydroxyl group of shikimic acid using ATP as a cosubstrate. This is Shikimate kinase from Leptospira biflexa serovar Patoc (strain Patoc 1 / Ames).